A 389-amino-acid polypeptide reads, in one-letter code: Large envelope protein (389 aa).

N-acetylmethionine is present on Met-1. A lipid anchor (N-myristoyl glycine; by host) is attached at Gly-2. Residues 2-108 form a pre-S1 region; it reads GQNLSTSNPL…PPLRDTHPQA (107 aa). Residues 2-163 are pre-S; that stretch reads GQNLSTSNPL…FSTTGDPAPN (162 aa). The Virion surface; in external conformation portion of the chain corresponds to 2–170; sequence GQNLSTSNPL…APNMENITSG (169 aa). Residues 2 to 242 are Intravirion; in internal conformation-facing; the sequence is GQNLSTSNPL…PGYRWMCLRR (241 aa). A disordered region spans residues 75–107; the sequence is TTLPANPPPASTNRQSGRQPTPLSPPLRDTHPQ. Over residues 85–95 the composition is skewed to polar residues; sequence STNRQSGRQPT. Residues 109–163 form a pre-S2 region; it reads MQWNSTTFHQALQDPRVRGLYFPAGGSSSGTLNPVPNTASHISSVFSTTGDPAPN. The helical transmembrane segment at 171–191 threads the bilayer; it reads FLGPLLVLQAGFFLLTKILTI. The Intravirion; in external conformation portion of the chain corresponds to 192–242; the sequence is PQSLDSWWTSLNFLGGAPVCLGQNSQSPTSNHSPTSCPPICPGYRWMCLRR. A helical transmembrane segment spans residues 243-263; the sequence is FIIFLFILLLCLIFLLVLLDY. Residues 264–337 lie on the Virion surface side of the membrane; that stretch reads QGMLPVCPLI…WASVRFSWLS (74 aa). A glycan (N-linked (GlcNAc...) asparagine; by host) is linked at Asn-309. A helical membrane pass occupies residues 338–358; sequence LLAPFVQWFAGLSPTVWLLAI. Topologically, residues 359–364 are intravirion; that stretch reads WMMWYW. A helical transmembrane segment spans residues 365–387; it reads GPNLYNILSPFIPLLPIFFCLWV. The Virion surface segment spans residues 388 to 389; the sequence is YI.

Belongs to the orthohepadnavirus major surface antigen family. In its internal form (Li-HBsAg), interacts with the capsid protein and with the isoform S. Interacts with host chaperone CANX. In terms of assembly, associates with host chaperone CANX through its pre-S2 N glycan; this association may be essential for isoform M proper secretion. As to quaternary structure, interacts with isoform L. Interacts with the antigens of satellite virus HDV (HDVAgs); this interaction is required for encapsidation of HDV genomic RNA. Post-translationally, isoform M is N-terminally acetylated by host at a ratio of 90%, and N-glycosylated by host at the pre-S2 region. Myristoylated.

It localises to the virion membrane. In terms of biological role, the large envelope protein exists in two topological conformations, one which is termed 'external' or Le-HBsAg and the other 'internal' or Li-HBsAg. In its external conformation the protein attaches the virus to cell receptors and thereby initiating infection. This interaction determines the species specificity and liver tropism. This attachment induces virion internalization predominantly through caveolin-mediated endocytosis. The large envelope protein also assures fusion between virion membrane and endosomal membrane. In its internal conformation the protein plays a role in virion morphogenesis and mediates the contact with the nucleocapsid like a matrix protein. The middle envelope protein plays an important role in the budding of the virion. It is involved in the induction of budding in a nucleocapsid independent way. In this process the majority of envelope proteins bud to form subviral lipoprotein particles of 22 nm of diameter that do not contain a nucleocapsid. This chain is Large envelope protein, found in Pan troglodytes (Chimpanzee).